Reading from the N-terminus, the 167-residue chain is Shikimate kinase (167 aa).

Position 12–17 (12–17) interacts with ATP; the sequence is GSGKTT. Threonine 16 contacts Mg(2+). Substrate is bound by residues aspartate 34, arginine 58, and glycine 80. Residue arginine 117 coordinates ATP. Substrate is bound at residue arginine 135. Arginine 152 lines the ATP pocket.

It belongs to the shikimate kinase family. As to quaternary structure, monomer. Requires Mg(2+) as cofactor.

It localises to the cytoplasm. It catalyses the reaction shikimate + ATP = 3-phosphoshikimate + ADP + H(+). It participates in metabolic intermediate biosynthesis; chorismate biosynthesis; chorismate from D-erythrose 4-phosphate and phosphoenolpyruvate: step 5/7. Functionally, catalyzes the specific phosphorylation of the 3-hydroxyl group of shikimic acid using ATP as a cosubstrate. This is Shikimate kinase from Salinispora arenicola (strain CNS-205).